The chain runs to 464 residues: tRNA modification GTPase MnmE (464 aa).

(6S)-5-formyl-5,6,7,8-tetrahydrofolate-binding residues include arginine 26, glutamate 92, and arginine 131. Residues glycine 227 to serine 385 form the TrmE-type G domain. Residue asparagine 237 coordinates K(+). GTP is bound by residues asparagine 237 to serine 242, serine 256 to threonine 262, and aspartate 281 to glycine 284. Serine 241 contacts Mg(2+). Positions 256, 258, and 261 each coordinate K(+). Threonine 262 is a Mg(2+) binding site. Lysine 464 contacts (6S)-5-formyl-5,6,7,8-tetrahydrofolate.

It belongs to the TRAFAC class TrmE-Era-EngA-EngB-Septin-like GTPase superfamily. TrmE GTPase family. As to quaternary structure, homodimer. Heterotetramer of two MnmE and two MnmG subunits. It depends on K(+) as a cofactor.

The protein localises to the cytoplasm. In terms of biological role, exhibits a very high intrinsic GTPase hydrolysis rate. Involved in the addition of a carboxymethylaminomethyl (cmnm) group at the wobble position (U34) of certain tRNAs, forming tRNA-cmnm(5)s(2)U34. This Brachyspira hyodysenteriae (strain ATCC 49526 / WA1) protein is tRNA modification GTPase MnmE.